Here is a 209-residue protein sequence, read N- to C-terminus: MEEILKHFPDLTNLQITQFEKLEALYQDWNAKINVISRKDIDELYTKHVLHSLAIAKIQKFEAGTYVLDVGTGGGFPGIPLAILFPETRFYLIDVILKKIKVVQAVAEALELKNVKAEQIRAENVKGDFDFIVSRAVTNMPDFVCWIKDKIKKTNKHELKNGILYLKGGDLTEELQDFPKAKEYNISEFFADDFFETKKVVHVPLKFKL.

S-adenosyl-L-methionine-binding positions include glycine 71, phenylalanine 76, 122–123, and arginine 135; that span reads AE.

This sequence belongs to the methyltransferase superfamily. RNA methyltransferase RsmG family.

It localises to the cytoplasm. Specifically methylates the N7 position of a guanine in 16S rRNA. This chain is Ribosomal RNA small subunit methyltransferase G, found in Flavobacterium psychrophilum (strain ATCC 49511 / DSM 21280 / CIP 103535 / JIP02/86).